The primary structure comprises 238 residues: U2 small nuclear ribonucleoprotein A' (238 aa).

LRR repeat units follow at residues 19–40 (KQVT…GITK), 42–63 (TYEV…PRLK), 64–84 (NLKV…DKLP), and 89–110 (HLQS…RILC). The region spanning 123 to 161 (NPITDSPNYRYFIVWLIPTLKVLDFSKVKQKELVKAKEL) is the LRRCT domain.

Belongs to the U2 small nuclear ribonucleoprotein A family. As to quaternary structure, associated with the spliceosome.

Its subcellular location is the nucleus. Its function is as follows. Involved in pre-mRNA splicing. The polypeptide is U2 small nuclear ribonucleoprotein A' (LEA1) (Debaryomyces hansenii (strain ATCC 36239 / CBS 767 / BCRC 21394 / JCM 1990 / NBRC 0083 / IGC 2968) (Yeast)).